The chain runs to 502 residues: ATP synthase subunit alpha (502 aa).

Residue 169–176 participates in ATP binding; it reads GDRQTGKT.

This sequence belongs to the ATPase alpha/beta chains family. As to quaternary structure, F-type ATPases have 2 components, CF(1) - the catalytic core - and CF(0) - the membrane proton channel. CF(1) has five subunits: alpha(3), beta(3), gamma(1), delta(1), epsilon(1). CF(0) has three main subunits: a(1), b(2) and c(9-12). The alpha and beta chains form an alternating ring which encloses part of the gamma chain. CF(1) is attached to CF(0) by a central stalk formed by the gamma and epsilon chains, while a peripheral stalk is formed by the delta and b chains.

Its subcellular location is the cell membrane. The catalysed reaction is ATP + H2O + 4 H(+)(in) = ADP + phosphate + 5 H(+)(out). In terms of biological role, produces ATP from ADP in the presence of a proton gradient across the membrane. The alpha chain is a regulatory subunit. The polypeptide is ATP synthase subunit alpha (Desulfitobacterium hafniense (strain Y51)).